Here is a 498-residue protein sequence, read N- to C-terminus: Glycerol kinase (498 aa).

Residue Thr-14 participates in ADP binding. Residues Thr-14, Thr-15, and Ser-16 each contribute to the ATP site. Position 14 (Thr-14) interacts with sn-glycerol 3-phosphate. ADP is bound at residue Arg-18. The sn-glycerol 3-phosphate site is built by Arg-84, Glu-85, Tyr-136, and Asp-243. Glycerol contacts are provided by Arg-84, Glu-85, Tyr-136, Asp-243, and Gln-244. Thr-265 and Gly-308 together coordinate ADP. Residues Thr-265, Gly-308, Gln-312, and Gly-409 each contribute to the ATP site. Gly-409 and Asn-413 together coordinate ADP.

This sequence belongs to the FGGY kinase family.

The catalysed reaction is glycerol + ATP = sn-glycerol 3-phosphate + ADP + H(+). It participates in polyol metabolism; glycerol degradation via glycerol kinase pathway; sn-glycerol 3-phosphate from glycerol: step 1/1. With respect to regulation, inhibited by fructose 1,6-bisphosphate (FBP). Key enzyme in the regulation of glycerol uptake and metabolism. Catalyzes the phosphorylation of glycerol to yield sn-glycerol 3-phosphate. The polypeptide is Glycerol kinase (Shewanella frigidimarina (strain NCIMB 400)).